Consider the following 141-residue polypeptide: Hemoglobin subunit alpha (141 aa).

Residues 1-141 (VLSPADKTNV…VSTVLTSKYR (141 aa)) form the Globin domain. The residue at position 3 (serine 3) is a Phosphoserine. Lysine 7 carries the post-translational modification N6-succinyllysine. Threonine 8 is subject to Phosphothreonine. Lysine 11 carries the post-translational modification N6-succinyllysine. At lysine 16 the chain carries N6-acetyllysine; alternate. Lysine 16 carries the post-translational modification N6-succinyllysine; alternate. Tyrosine 24 bears the Phosphotyrosine mark. Position 35 is a phosphoserine (serine 35). Lysine 40 bears the N6-succinyllysine mark. Serine 49 carries the phosphoserine modification. Residue histidine 58 coordinates O2. Histidine 87 is a heme b binding site. At serine 102 the chain carries Phosphoserine. A Phosphothreonine modification is found at threonine 108. Serine 124 and serine 131 each carry phosphoserine. Phosphothreonine is present on residues threonine 134 and threonine 137. At serine 138 the chain carries Phosphoserine.

It belongs to the globin family. Heterotetramer of two alpha chains and two beta chains. As to expression, red blood cells.

In terms of biological role, involved in oxygen transport from the lung to the various peripheral tissues. Hemopressin acts as an antagonist peptide of the cannabinoid receptor CNR1. Hemopressin-binding efficiently blocks cannabinoid receptor CNR1 and subsequent signaling. The sequence is that of Hemoglobin subunit alpha (HBA) from Gorilla gorilla gorilla (Western lowland gorilla).